A 671-amino-acid chain; its full sequence is cGMP-dependent protein kinase 1 (671 aa).

Ser2 is modified (N-acetylserine). Positions 2-59 form a coiled coil; that stretch reads SELEEDFAKILMLKEERIKELEKRLSEKEEEIQELKRKLHKCQSVLPVPSTHIGPRTT. The interval 2–102 is required for dimerization; it reads SELEEDFAKI…LIKEAILDND (101 aa). Residues 9-44 form a leucine-zipper region; the sequence is AKILMLKEERIKELEKRLSEKEEEIQELKRKLHKCQ. Residues 50-75 are autoinhibitory domain; it reads PSTHIGPRTTRAQGISAEPQTYRSFH. Phosphothreonine; by autocatalysis is present on Thr59. The segment at 103 to 220 is cGMP-binding, high affinity; sequence FMKNLELSQI…EYMEFLKSVP (118 aa). 3',5'-cyclic GMP-binding positions include 167–170, 177–178, Arg282, 291–294, 301–302, and Tyr336; these read GELA, RT, and GEKA. The segment at 221-341 is cGMP-binding, low affinity; it reads TFQSLPEEIL…SNKAYEDAEA (121 aa). The 260-residue stretch at 360–619 folds into the Protein kinase domain; the sequence is FNIIDTLGVG…VKDIQKHKWF (260 aa). ATP is bound by residues 366 to 374 and Lys390; that span reads LGVGGFGRV. Catalysis depends on Asp484, which acts as the Proton acceptor. Thr515 is modified (phosphothreonine). An AGC-kinase C-terminal domain is found at 620–671; it reads EGFNWEGLRKGTLTPPIIPSVASPTDTSNFDGFPEDNDEPPPDDNSGWDIDF. Residues 635-671 form a disordered region; that stretch reads PIIPSVASPTDTSNFDGFPEDNDEPPPDDNSGWDIDF. Over residues 652–661 the composition is skewed to acidic residues; the sequence is FPEDNDEPPP.

Belongs to the protein kinase superfamily. AGC Ser/Thr protein kinase family. cGMP subfamily. Isoform alpha: parallel homodimer or heterodimer and also heterotetramer. Interacts directly with PPP1R12A. Non-covalent dimer of dimer of PRKG1-PRKG1 and PPP1R12A-PPP1R12A. This interaction targets PRKG1 to stress fibers to mediate smooth muscle cell relaxation and vasodilation in responses to rises in cGMP. Isoform beta: antiparallel homodimer. Part of cGMP kinase signaling complex at least composed of ACTA2/alpha-actin, CNN1/calponin H1, PLN/phospholamban, PRKG1 and ITPR1. Interacts with IRAG1. Forms a stable complex with ITPR1, IRAG1, and isoform beta of PRKG1. Interacts with TRPC7 (via ankyrin repeat domain). Isoform alpha interacts with RGS2. Interacts with GTF2I. Autophosphorylation increases kinase activity. In terms of processing, 65 kDa monomer is produced by proteolytic cleavage.

The protein resides in the cytoplasm. The catalysed reaction is L-seryl-[protein] + ATP = O-phospho-L-seryl-[protein] + ADP + H(+). It carries out the reaction L-threonyl-[protein] + ATP = O-phospho-L-threonyl-[protein] + ADP + H(+). Its activity is regulated as follows. In the absence of cGMP, PRKG1 activity is suppressed by autoinhibitory contacts. In terms of biological role, serine/threonine protein kinase that acts as a key mediator of the nitric oxide (NO)/cGMP signaling pathway. GMP binding activates PRKG1, which phosphorylates serines and threonines on many cellular proteins. Numerous protein targets for PRKG1 phosphorylation are implicated in modulating cellular calcium, but the contribution of each of these targets may vary substantially among cell types. Proteins that are phosphorylated by PRKG1 regulate platelet activation and adhesion, smooth muscle contraction, cardiac function, gene expression, feedback of the NO-signaling pathway, and other processes involved in several aspects of the CNS like axon guidance, hippocampal and cerebellar learning, circadian rhythm and nociception. Smooth muscle relaxation is mediated through lowering of intracellular free calcium, by desensitization of contractile proteins to calcium, and by decrease in the contractile state of smooth muscle or in platelet activation. Regulates intracellular calcium levels via several pathways: phosphorylates IRAG1 and inhibits IP3-induced Ca(2+) release from intracellular stores, phosphorylation of KCNMA1 (BKCa) channels decreases intracellular Ca(2+) levels, which leads to increased opening of this channel. PRKG1 phosphorylates the canonical transient receptor potential channel (TRPC) family which inactivates the associated inward calcium current. Another mode of action of NO/cGMP/PKGI signaling involves PKGI-mediated inactivation of the Ras homolog gene family member A (RhoA). Phosphorylation of RHOA by PRKG1 blocks the action of this protein in myriad processes: regulation of RHOA translocation; decreasing contraction; controlling vesicle trafficking, reduction of myosin light chain phosphorylation resulting in vasorelaxation. Activation of PRKG1 by NO signaling also alters gene expression in a number of tissues. In smooth muscle cells, increased cGMP and PRKG1 activity influence expression of smooth muscle-specific contractile proteins, levels of proteins in the NO/cGMP signaling pathway, down-regulation of the matrix proteins osteopontin and thrombospondin-1 to limit smooth muscle cell migration and phenotype. Regulates vasodilator-stimulated phosphoprotein (VASP) functions in platelets and smooth muscle. This Oryctolagus cuniculus (Rabbit) protein is cGMP-dependent protein kinase 1 (PRKG1).